A 967-amino-acid polypeptide reads, in one-letter code: Siderophore exporter MmpL4 (967 aa).

Transmembrane regions (helical) follow at residues 26–46, 210–230, 242–262, 303–323, 333–353, 384–404, 769–789, 793–813, 821–841, 875–895, and 913–934; these read AFAV…TVFV, VIFI…LLLI, VVAV…VSLL, AHVI…LSFA, IPCA…GPAV, WPLP…LALP, WDLL…MLII, FIAA…SFGL, ILAI…LLAV, VVTN…VSDL, and TLIV…WFWW. The tract at residues 943–967 is disordered; that stretch reads ARTPTVPSETQPAGRPLAMSSDRLG.

The protein belongs to the resistance-nodulation-cell division (RND) (TC 2.A.6) family. MmpL subfamily. In terms of assembly, interacts with MmpS4.

The protein resides in the cell inner membrane. Its function is as follows. Part of an export system, which is required for biosynthesis and secretion of siderophores. The polypeptide is Siderophore exporter MmpL4 (mmpL4) (Mycobacterium tuberculosis (strain CDC 1551 / Oshkosh)).